A 152-amino-acid polypeptide reads, in one-letter code: Zinc finger SWIM domain-containing protein 7 (152 aa).

The SWIM-type zinc finger occupies 76–114 (YTCLASCHYCSCPAFSFSVLRKSDSLLCKHLLAIYLSQL).

This sequence belongs to the SWS1 family. In terms of assembly, interacts with RAD51D and XRCC3; involved in homologous recombination repair. Interacts with SWSAP1; they form a functional complex involved in homologous recombination repair and stabilize each other.

The protein localises to the nucleus. In terms of biological role, involved in early stages of the homologous recombination repair (HRR) pathway of double-stranded DNA breaks arising during DNA replication or induced by DNA-damaging agents. Required for meiotic progression, hence for fertility. In Mus musculus (Mouse), this protein is Zinc finger SWIM domain-containing protein 7 (Zswim7).